Here is a 311-residue protein sequence, read N- to C-terminus: Aspartate carbamoyltransferase catalytic subunit (311 aa).

2 residues coordinate carbamoyl phosphate: arginine 55 and threonine 56. L-aspartate is bound at residue lysine 85. Carbamoyl phosphate-binding residues include arginine 106, histidine 135, and glutamine 138. The L-aspartate site is built by arginine 168 and arginine 230. Positions 268 and 269 each coordinate carbamoyl phosphate.

The protein belongs to the aspartate/ornithine carbamoyltransferase superfamily. ATCase family. Heterododecamer (2C3:3R2) of six catalytic PyrB chains organized as two trimers (C3), and six regulatory PyrI chains organized as three dimers (R2).

It catalyses the reaction carbamoyl phosphate + L-aspartate = N-carbamoyl-L-aspartate + phosphate + H(+). The protein operates within pyrimidine metabolism; UMP biosynthesis via de novo pathway; (S)-dihydroorotate from bicarbonate: step 2/3. Its function is as follows. Catalyzes the condensation of carbamoyl phosphate and aspartate to form carbamoyl aspartate and inorganic phosphate, the committed step in the de novo pyrimidine nucleotide biosynthesis pathway. This Klebsiella pneumoniae subsp. pneumoniae (strain ATCC 700721 / MGH 78578) protein is Aspartate carbamoyltransferase catalytic subunit.